The sequence spans 337 residues: 4-hydroxy-3-methylbut-2-enyl diphosphate reductase (337 aa).

Cys38 lines the [4Fe-4S] cluster pocket. (2E)-4-hydroxy-3-methylbut-2-enyl diphosphate is bound by residues His67 and His100. Dimethylallyl diphosphate contacts are provided by His67 and His100. 2 residues coordinate isopentenyl diphosphate: His67 and His100. Cys122 is a [4Fe-4S] cluster binding site. (2E)-4-hydroxy-3-methylbut-2-enyl diphosphate is bound at residue His150. Position 150 (His150) interacts with dimethylallyl diphosphate. Position 150 (His150) interacts with isopentenyl diphosphate. The Proton donor role is filled by Glu152. Thr190 serves as a coordination point for (2E)-4-hydroxy-3-methylbut-2-enyl diphosphate. Cys220 is a binding site for [4Fe-4S] cluster. 4 residues coordinate (2E)-4-hydroxy-3-methylbut-2-enyl diphosphate: Ser248, Ser249, Asn250, and Ser293. 4 residues coordinate dimethylallyl diphosphate: Ser248, Ser249, Asn250, and Ser293. 4 residues coordinate isopentenyl diphosphate: Ser248, Ser249, Asn250, and Ser293.

Belongs to the IspH family. [4Fe-4S] cluster serves as cofactor.

The enzyme catalyses isopentenyl diphosphate + 2 oxidized [2Fe-2S]-[ferredoxin] + H2O = (2E)-4-hydroxy-3-methylbut-2-enyl diphosphate + 2 reduced [2Fe-2S]-[ferredoxin] + 2 H(+). It carries out the reaction dimethylallyl diphosphate + 2 oxidized [2Fe-2S]-[ferredoxin] + H2O = (2E)-4-hydroxy-3-methylbut-2-enyl diphosphate + 2 reduced [2Fe-2S]-[ferredoxin] + 2 H(+). The protein operates within isoprenoid biosynthesis; dimethylallyl diphosphate biosynthesis; dimethylallyl diphosphate from (2E)-4-hydroxy-3-methylbutenyl diphosphate: step 1/1. It participates in isoprenoid biosynthesis; isopentenyl diphosphate biosynthesis via DXP pathway; isopentenyl diphosphate from 1-deoxy-D-xylulose 5-phosphate: step 6/6. Its function is as follows. Catalyzes the conversion of 1-hydroxy-2-methyl-2-(E)-butenyl 4-diphosphate (HMBPP) into a mixture of isopentenyl diphosphate (IPP) and dimethylallyl diphosphate (DMAPP). Acts in the terminal step of the DOXP/MEP pathway for isoprenoid precursor biosynthesis. In Mycolicibacterium vanbaalenii (strain DSM 7251 / JCM 13017 / BCRC 16820 / KCTC 9966 / NRRL B-24157 / PYR-1) (Mycobacterium vanbaalenii), this protein is 4-hydroxy-3-methylbut-2-enyl diphosphate reductase.